Here is a 354-residue protein sequence, read N- to C-terminus: Carbonic anhydrase 12 (354 aa).

A signal peptide spans 1–24 (MPHRSLRATVVLLLVILKKQPSSS). Over 25–301 (APLNGSKWTY…QGLLTDTGLS (277 aa)) the chain is Extracellular. N-linked (GlcNAc...) asparagine glycans are attached at residues Asn28, Asn42, Asn80, and Asn88. An Alpha-carbonic anhydrase domain is found at 30–290 (SKWTYVGPAG…FDERLVYISF (261 aa)). Cys50 and Cys231 form a disulfide bridge. Residue His94 is the Proton donor/acceptor of the active site. The Zn(2+) site is built by His120, His122, and His146. Residue 227–228 (TT) coordinates substrate. Residues 302-322 (LGIILSVALAGVLGISIVLAV) form a helical membrane-spanning segment. Topologically, residues 323–354 (SIWLFKRKKSKKGDNKGVIYKPAIKKEAEVHA) are cytoplasmic.

Belongs to the alpha-carbonic anhydrase family. Homodimer. Requires Zn(2+) as cofactor.

It localises to the membrane. The protein resides in the cell membrane. The enzyme catalyses hydrogencarbonate + H(+) = CO2 + H2O. Inhibited by acetazolamide. Functionally, reversible hydration of carbon dioxide. The chain is Carbonic anhydrase 12 from Mus musculus (Mouse).